We begin with the raw amino-acid sequence, 238 residues long: Ribosomal RNA small subunit methyltransferase G (238 aa).

Residues Gly77, Phe82, 128-129 (AE), and Arg147 each bind S-adenosyl-L-methionine.

This sequence belongs to the methyltransferase superfamily. RNA methyltransferase RsmG family.

It is found in the cytoplasm. Specifically methylates the N7 position of guanine in position 535 of 16S rRNA. This Brevibacillus brevis (strain 47 / JCM 6285 / NBRC 100599) protein is Ribosomal RNA small subunit methyltransferase G.